The chain runs to 478 residues: Sugar transporter ERD6-like 18 (478 aa).

Transmembrane regions (helical) follow at residues 31 to 51, 71 to 91, 110 to 130, 133 to 153, 162 to 180, 188 to 208, 270 to 290, 306 to 326, 333 to 353, 367 to 387, 407 to 427, and 433 to 453; these read ITAC…SFGV, IAQF…GALF, LLCI…WLNF, ISSG…IAEI, FTFT…VYFS, ILAL…FFVP, TLVV…SAVL, IGST…VILV, PLLL…GVAF, VFTF…LGGL, IVTL…NFLL, and GTFY…WLLV.

The protein belongs to the major facilitator superfamily. Sugar transporter (TC 2.A.1.1) family. Expressed in leaf vasculature, stem and flowers.

The protein resides in the membrane. In terms of biological role, sugar transporter. This chain is Sugar transporter ERD6-like 18 (SFP2), found in Arabidopsis thaliana (Mouse-ear cress).